The following is a 138-amino-acid chain: Phospholipase A2 EC3 (138 aa).

The first 16 residues, 1 to 16 (MRTLWIVAVWLMGVEG), serve as a signal peptide directing secretion. 7 cysteine pairs are disulfide-bonded: Cys-42–Cys-131, Cys-44–Cys-60, Cys-59–Cys-111, Cys-65–Cys-138, Cys-66–Cys-104, Cys-73–Cys-97, and Cys-91–Cys-102. Residues Tyr-43, Gly-45, and Gly-47 each contribute to the Ca(2+) site. His-63 is a catalytic residue. Asp-64 provides a ligand contact to Ca(2+). The active site involves Asp-105.

Belongs to the phospholipase A2 family. Group II subfamily. It depends on Ca(2+) as a cofactor.

Its subcellular location is the secreted. It carries out the reaction a 1,2-diacyl-sn-glycero-3-phosphocholine + H2O = a 1-acyl-sn-glycero-3-phosphocholine + a fatty acid + H(+). In terms of biological role, PA2 catalyzes the calcium-dependent hydrolysis of the 2-acyl groups in 3-sn-phosphoglycerides. The chain is Phospholipase A2 EC3 from Echis coloratus (Carpet viper).